The primary structure comprises 59 residues: Light-harvesting protein B-800-850 alpha chain E (59 aa).

Topologically, residues 1-11 (MNQGRIWTVVK) are cytoplasmic. Residues 12–35 (PTVGLPLLLGSVTVIAILVHFAVL) form a helical membrane-spanning segment. H31 is an a bacteriochlorophyll binding site. Residues 36-59 (SNTTWFSKYWNGKAAAIESSVSIG) lie on the Periplasmic side of the membrane.

This sequence belongs to the antenna complex alpha subunit family. The core complex is formed by different alpha and beta chains, binding bacteriochlorophyll molecules, and arranged most probably in tetrameric structures disposed around the reaction center. The non-pigmented gamma chains may constitute additional components.

It localises to the cell inner membrane. Antenna complexes are light-harvesting systems, which transfer the excitation energy to the reaction centers. The sequence is that of Light-harvesting protein B-800-850 alpha chain E (pucAE) from Rhodopseudomonas palustris (strain ATCC BAA-98 / CGA009).